A 197-amino-acid polypeptide reads, in one-letter code: Large ribosomal subunit protein uL11 (197 aa).

This sequence belongs to the universal ribosomal protein uL11 family. In terms of assembly, part of the ribosomal stalk of the 50S ribosomal subunit. Interacts with L10 and the large rRNA to form the base of the stalk. L10 forms an elongated spine to which L12 dimers bind in a sequential fashion forming a multimeric L10(L12)X complex. One or more lysine residues are methylated.

Its function is as follows. Forms part of the ribosomal stalk which helps the ribosome interact with GTP-bound translation factors. This Mycoplasma mobile (strain ATCC 43663 / 163K / NCTC 11711) (Mesomycoplasma mobile) protein is Large ribosomal subunit protein uL11.